The following is a 500-amino-acid chain: MAASFVIVIVISFFISLAFMCYVHYTSRQRRKLHGYGHEKAVRLPPGSMGWPYIGETLQLYSQDPNVFFASKQKRYGEIFKTHILGCPCVMLASPEAARFVLVTQAHLFKPTYPRSKERMIGPSALFFNQGDYHLRLRKLVQGPLGPDALRALVPDVEAAVRSTLASWDGNVSSTFHAMKRLSFDVGIVTIFGGRLDERRKAELRQNYAIVEKGYNSFPNSFPGTLYYKAIQARRRLHGVLSDIMRERRARGEPGSDLLGCLMQSRAGDDGALLTDEQVADNIIGVLFAAQDTTASVLTWIVKYLHDHPKLLEAVRAEQAAIRAANDGGRLPLTWAQTRSMALTHKVILESLRMASIISFTFREAVADVEYKGFLIPKGWKVMPLFRNIHHNPDYFQDPQKFDPSRFKVSPRPNTFMPFGNGVHACPGNELAKLEMLVLIHHLVTGYRWEIVGSSDEVEYSPFPVPKHGLLAKLWRDDTVSVETDGCQNGDNDDNGVAMV.

The chain crosses the membrane as a helical span at residues 3–23 (ASFVIVIVISFFISLAFMCYV). Cys-426 is a heme binding site.

This sequence belongs to the cytochrome P450 family. Requires heme as cofactor.

Its subcellular location is the membrane. The catalysed reaction is 2-cis-(+)-abscisate + reduced [NADPH--hemoprotein reductase] + O2 = (+)-8'-hydroxyabscisate + oxidized [NADPH--hemoprotein reductase] + H2O + H(+). The protein operates within plant hormone degradation; abscisic acid degradation. Its function is as follows. Involved in the oxidative degradation of abscisic acid. This is Abscisic acid 8'-hydroxylase 3 (CYP707A7) from Oryza sativa subsp. indica (Rice).